Reading from the N-terminus, the 173-residue chain is Co-chaperone protein HscB homolog (173 aa).

Residues 5 to 77 (CHFAQFDLQP…PRRALYLLTL (73 aa)) form the J domain.

This sequence belongs to the HscB family. As to quaternary structure, interacts with HscA and stimulates its ATPase activity.

Co-chaperone involved in the maturation of iron-sulfur cluster-containing proteins. Seems to help targeting proteins to be folded toward HscA. The protein is Co-chaperone protein HscB homolog of Pseudomonas aeruginosa (strain UCBPP-PA14).